The following is a 314-amino-acid chain: Nodulation protein D 1 (314 aa).

One can recognise an HTH lysR-type domain in the interval 6 to 63; that stretch reads LDLNLLVALDALMTERNLTAAARKIHLSQPAMSAAVARLRTYFGDELFTMRGRELVPT. The H-T-H motif DNA-binding region spans 23-42; it reads LTAAARKIHLSQPAMSAAVA.

This sequence belongs to the LysR transcriptional regulatory family.

NodD regulates the expression of the nodABCFE genes which encode other nodulation proteins. NodD is also a negative regulator of its own expression. Binds flavonoids as inducers. This Bradyrhizobium sp. (strain NC92) protein is Nodulation protein D 1 (nodD1).